Here is a 370-residue protein sequence, read N- to C-terminus: Neutral protease 2 homolog AFUB_070680 (370 aa).

The N-terminal stretch at 1-19 is a signal peptide; sequence MKVTILASAILALINGALA. A propeptide spanning residues 20 to 172 is cleaved from the precursor; it reads LPANTPTLDV…PQAIKLLDRR (153 aa). Intrachain disulfides connect Cys-178/Cys-250 and Cys-257/Cys-275. Position 300 (His-300) interacts with Zn(2+). Glu-301 is an active-site residue. Zn(2+) contacts are provided by His-304 and Asp-315.

It belongs to the peptidase M35 family. Zn(2+) serves as cofactor.

The protein localises to the secreted. The catalysed reaction is Preferential cleavage of bonds with hydrophobic residues in P1'. Also 3-Asn-|-Gln-4 and 8-Gly-|-Ser-9 bonds in insulin B chain.. In terms of biological role, secreted metalloproteinase that allows assimilation of proteinaceous substrates. Shows high activities on basic nuclear substrates such as histone and protamine. May be involved in virulence. This Aspergillus fumigatus (strain CBS 144.89 / FGSC A1163 / CEA10) (Neosartorya fumigata) protein is Neutral protease 2 homolog AFUB_070680.